The primary structure comprises 366 residues: Protein FAM110B (366 aa).

Disordered stretches follow at residues 127-152 (SSEG…DTTD), 163-182 (KVYP…HVSR), and 216-252 (CSSS…RPSL). Ser-234 and Ser-297 each carry phosphoserine. Residues 313–333 (DCEQSQDSNSDLRNDDSANDR) form a disordered region. Positions 322-331 (SDLRNDDSAN) are enriched in basic and acidic residues.

This sequence belongs to the FAM110 family.

Its subcellular location is the cytoplasm. It is found in the cytoskeleton. The protein resides in the microtubule organizing center. It localises to the centrosome. The polypeptide is Protein FAM110B (Fam110b) (Mus musculus (Mouse)).